The chain runs to 443 residues: Cobyrinate a,c-diamide synthase (443 aa).

A GATase cobBQ-type domain is found at 244-435; the sequence is KVSVAMDSAF…AHIHFLSNPR (192 aa). Cys-327 (nucleophile) is an active-site residue.

This sequence belongs to the CobB/CbiA family. Mg(2+) is required as a cofactor.

The enzyme catalyses cob(II)yrinate + 2 L-glutamine + 2 ATP + 2 H2O = cob(II)yrinate a,c diamide + 2 L-glutamate + 2 ADP + 2 phosphate + 2 H(+). It functions in the pathway cofactor biosynthesis; adenosylcobalamin biosynthesis; cob(II)yrinate a,c-diamide from sirohydrochlorin (anaerobic route): step 10/10. In terms of biological role, catalyzes the ATP-dependent amidation of the two carboxylate groups at positions a and c of cobyrinate, using either L-glutamine or ammonia as the nitrogen source. The chain is Cobyrinate a,c-diamide synthase from Thermoplasma acidophilum (strain ATCC 25905 / DSM 1728 / JCM 9062 / NBRC 15155 / AMRC-C165).